The chain runs to 174 residues: MAEINKPAFKKPDLKKMTPKGERKANRRGAARLAAVQALYQMDIGGAGINETFAEFESFWIGNEVEGEQYLPAEAAFFRDIVAGVVREQKQIDPLIDDLLARGWPLARIDAILRAVMRAGAYELEHRKDIPARVVVSEYVDVAHAFVEKDETGMVNAVLDQIARRFREDEFTRS.

The protein belongs to the NusB family.

Its function is as follows. Involved in transcription antitermination. Required for transcription of ribosomal RNA (rRNA) genes. Binds specifically to the boxA antiterminator sequence of the ribosomal RNA (rrn) operons. This is Transcription antitermination protein NusB from Rhodopseudomonas palustris (strain ATCC BAA-98 / CGA009).